We begin with the raw amino-acid sequence, 340 residues long: MDRDPSEEDSMADLSFEAESPVLPPDELLEGLPSYDWLLQGRERQVFFPPLEALGRSQEPACWSSVLEHSRVPVVTEEVAREALLSFVNSHCCYSSAAAGNLIIQELRQQTLCRYRLETFSESRVSEWTFQPVTNHSVDGPQRGTSPRLWDMKVQVPPMFQEDTRKLQVPHSSLVKECHKCHGRGRYKCSGCHGAGMVRCSSCSGTKRKAKQPRRCHLCSGSGRRRCSTCSGRGNKTCATCKGERKLEHFVQLVIMWKNSLFEFMSPHHLHCPKELLAKARGENLFRDENATVYPIVDFPLQDISLASQRGIEEHSTMLASRARILQQMFFYSGGPFHHS.

Residues 1 to 11 (MDRDPSEEDSM) show a composition bias toward acidic residues. Positions 1-20 (MDRDPSEEDSMADLSFEAES) are disordered.

As to expression, widely expressed, with highest levels in the liver, intestine, tongue and underjaw.

The protein resides in the cytoplasm. It is found in the nucleus. Its function is as follows. Plays a role in odontogenesis. The sequence is that of Protein SSUH2 homolog from Mus musculus (Mouse).